The primary structure comprises 247 residues: Adenosylcobinamide-GDP ribazoletransferase (247 aa).

The next 5 helical transmembrane spans lie at 34–54, 59–79, 113–133, 138–158, and 194–214; these read IITFPLIGLLLGAISGLVFMV, CGAPLAALFSVLVLVLMTGGF, GGLALIFVVLAKILVLSELAL, ILASLAAACAVSRGTAALLMY, and VLLPGMHGVAAMVVTMVAIFI.

The protein belongs to the CobS family. Mg(2+) is required as a cofactor.

It is found in the cell inner membrane. The catalysed reaction is alpha-ribazole + adenosylcob(III)inamide-GDP = adenosylcob(III)alamin + GMP + H(+). It carries out the reaction alpha-ribazole 5'-phosphate + adenosylcob(III)inamide-GDP = adenosylcob(III)alamin 5'-phosphate + GMP + H(+). It participates in cofactor biosynthesis; adenosylcobalamin biosynthesis; adenosylcobalamin from cob(II)yrinate a,c-diamide: step 7/7. Functionally, joins adenosylcobinamide-GDP and alpha-ribazole to generate adenosylcobalamin (Ado-cobalamin). Also synthesizes adenosylcobalamin 5'-phosphate from adenosylcobinamide-GDP and alpha-ribazole 5'-phosphate. This chain is Adenosylcobinamide-GDP ribazoletransferase, found in Escherichia coli O157:H7.